Reading from the N-terminus, the 276-residue chain is Rhomboid protease GlpG (276 aa).

A run of 6 helical transmembrane segments spans residues 94-114, 142-162, 169-189, 192-212, 229-249, and 250-270; these read GPVT…MQIL, ALMH…WYLG, LGSG…GYVQ, FSGP…GYVW, LIIF…GMSM, and ANGA…VDSL. The Nucleophile role is filled by Ser201. His254 is a catalytic residue.

Belongs to the peptidase S54 family.

The protein localises to the cell inner membrane. The enzyme catalyses Cleaves type-1 transmembrane domains using a catalytic dyad composed of serine and histidine that are contributed by different transmembrane domains.. Rhomboid-type serine protease that catalyzes intramembrane proteolysis. The sequence is that of Rhomboid protease GlpG from Escherichia coli O7:K1 (strain IAI39 / ExPEC).